Consider the following 231-residue polypeptide: Eukaryotic translation initiation factor 4E allele A (231 aa).

Basic and acidic residues predominate over residues 1 to 20 (MAAAEMERTTSFDAAEKLKA). Residues 1 to 36 (MAAAEMERTTSFDAAEKLKAADAGGGEVDDELEEGE) form a disordered region. Acidic residues predominate over residues 27-36 (EVDDELEEGE). EIF4G-binding regions lie at residues 56 to 59 (HPLE) and 66 to 102 (FDSPIAKSRQTAWGSSLRNVYTFSTVEDFWGAYNNIH). Residues 74 to 79 (RQTAWG), K106, and 124 to 125 (WE) contribute to the mRNA site. Residues C129 and C167 are joined by a disulfide bond. Residues 150–159 (YTLLAMIGHQ) are EIF4G-binding. Residues 174-179 (RSKGEK) and 219-223 (KRLDR) contribute to the mRNA site.

This sequence belongs to the eukaryotic initiation factor 4E family. In terms of assembly, EIF4F is a multi-subunit complex, the composition of which varies with external and internal environmental conditions. It is composed of at least EIF4A, EIF4E and EIF4G. EIF4E is also known to interact with other partners. In higher plants two isoforms of EIF4F have been identified, named isoform EIF4F and isoform EIF(iso)4F. Isoform EIF4F has subunits p220 and p26, whereas isoform EIF(iso)4F has subunits p82 and p28. (Microbial infection) Interacts with viral genome-linked protein (VPg); this interaction is possible in susceptible hosts but impaired in resistant plants. In terms of processing, according to the redox status, the Cys-129-Cys-167 disulfide bridge may have a role in regulating protein function by affecting its ability to bind capped mRNA.

The protein resides in the nucleus. Its subcellular location is the cytoplasm. In terms of biological role, component of the protein complex eIF4F, which is involved in the recognition of the mRNA cap, ATP-dependent unwinding of 5'-terminal secondary structure and recruitment of mRNA to the ribosome. Recognizes and binds the 7-methylguanosine-containing mRNA cap during an early step in the initiation of protein synthesis and facilitates ribosome binding by inducing the unwinding of the mRNAs secondary structures. Key component of recessive resistance to potyviruses. Functionally, (Microbial infection) Susceptibility host factor required for viral infection (e.g. Potato virus Y (PVY)) by recruiting viral RNAs to the host ribosomal complex via an interaction with viral genome-linked protein (VPg). This Solanum tuberosum (Potato) protein is Eukaryotic translation initiation factor 4E allele A.